We begin with the raw amino-acid sequence, 93 residues long: UPF0473 protein RBAM_024480 (93 aa).

It belongs to the UPF0473 family.

The protein is UPF0473 protein RBAM_024480 of Bacillus velezensis (strain DSM 23117 / BGSC 10A6 / LMG 26770 / FZB42) (Bacillus amyloliquefaciens subsp. plantarum).